We begin with the raw amino-acid sequence, 370 residues long: MALSAEGSSGGSRGGSPKAEAASVPSWPQILGRLTDNRDLARGQAAWAMDQIMTGNARPAQIAAFAVAMTMKAPTADEVGELAGVMLSHAHPLPADTVPDDAVDVVGTGGDGVNTVNLSTMAAIVVAAAGVPVVKHGNRAASSLSGGADTLEALGVRIDLGPDLVARSLAEVGIGFCFAPRFHPSYRHAAAVRREIGVPTVFNLLGPLTNPARPRAGLIGCAFADLAEVMAGVFAARRSSVLVVHGDDGLDELTTTTTSTIWRVAAGSVDKLTFDPAGFGFARAQLDQLAGGDAQANAAAVRAVLGGARGPVRDAVVLNAAGAIVAHAGLSSRAEWLPAWEEGLRRASAAIDTGAAEQLLARWVRFGRQI.

The segment at 1–27 is disordered; it reads MALSAEGSSGGSRGGSPKAEAASVPSW. Residues G107, 110-111, T115, 117-120, 135-143, and G147 contribute to the 5-phospho-alpha-D-ribose 1-diphosphate site; these read GD, NLST, and KHGNRAASS. G107 lines the anthranilate pocket. S119 lines the Mg(2+) pocket. Anthranilate is bound at residue N138. R193 contacts anthranilate. 2 residues coordinate Mg(2+): D251 and E252.

This sequence belongs to the anthranilate phosphoribosyltransferase family. In terms of assembly, homodimer. Requires Mg(2+) as cofactor.

It catalyses the reaction N-(5-phospho-beta-D-ribosyl)anthranilate + diphosphate = 5-phospho-alpha-D-ribose 1-diphosphate + anthranilate. It participates in amino-acid biosynthesis; L-tryptophan biosynthesis; L-tryptophan from chorismate: step 2/5. Catalyzes the transfer of the phosphoribosyl group of 5-phosphorylribose-1-pyrophosphate (PRPP) to anthranilate to yield N-(5'-phosphoribosyl)-anthranilate (PRA). This Mycobacterium bovis (strain ATCC BAA-935 / AF2122/97) protein is Anthranilate phosphoribosyltransferase.